A 272-amino-acid chain; its full sequence is Shikimate dehydrogenase (NADP(+)) (272 aa).

Residues 14 to 16 (SKS) and Thr-61 each bind shikimate. The Proton acceptor role is filled by Lys-65. Glu-77 is a binding site for NADP(+). Asn-86 and Asp-102 together coordinate shikimate. Residues 126-130 (GAGGA), 149-154 (NRTVSR), and Met-213 contribute to the NADP(+) site. Tyr-215 is a binding site for shikimate. Gly-237 contacts NADP(+).

Belongs to the shikimate dehydrogenase family. Homodimer.

It catalyses the reaction shikimate + NADP(+) = 3-dehydroshikimate + NADPH + H(+). The protein operates within metabolic intermediate biosynthesis; chorismate biosynthesis; chorismate from D-erythrose 4-phosphate and phosphoenolpyruvate: step 4/7. In terms of biological role, involved in the biosynthesis of the chorismate, which leads to the biosynthesis of aromatic amino acids. Catalyzes the reversible NADPH linked reduction of 3-dehydroshikimate (DHSA) to yield shikimate (SA). The chain is Shikimate dehydrogenase (NADP(+)) from Escherichia coli O7:K1 (strain IAI39 / ExPEC).